Here is a 254-residue protein sequence, read N- to C-terminus: Alcohol dehydrogenase (254 aa).

10–33 (FVAGLGGIGFDTSREIVKSGPKNL) lines the NAD(+) pocket. Ser138 lines the substrate pocket. The active-site Proton acceptor is Tyr151.

Belongs to the short-chain dehydrogenases/reductases (SDR) family. In terms of assembly, homodimer.

The enzyme catalyses a primary alcohol + NAD(+) = an aldehyde + NADH + H(+). The catalysed reaction is a secondary alcohol + NAD(+) = a ketone + NADH + H(+). The chain is Alcohol dehydrogenase (Adh) from Drosophila mayaguana (Fruit fly).